The sequence spans 302 residues: MSAIENIVISMENATERRKHITKQFESKKLSFSFFNAYTYQSINQSINQSINQSINQSINQSINQSINQSNSILHNIEESRILTKGEKGCLISHFLLWNKCVNENFEYLKIFEDDVILGENAEVFLNQNEWLKTRFDFNDIFIIRLETFLQPVKLEKQTKIPPFNSRNFDILKSTHWGTAGYIISQGAAKYVIEYLKNIPSDEIVAVDELIFNKLVDVDNYIVYQLNPAICIQELQANQSKSVLTSGLEKERQKRSKIRKKKTLKQRLTRIKENIIRALNRKKWKEQQRIKEMQGKEIVRFM.

Tandem repeats lie at residues 42–45 (SINQ), 46–49 (SINQ), 50–53 (SINQ), 54–57 (SINQ), 58–61 (SINQ), 62–65 (SINQ), and 66–69 (SINQ). The interval 42-69 (SINQSINQSINQSINQSINQSINQSINQ) is 7 X 4 AA tandem repeats of S-I-N-Q.

It belongs to the glycosyltransferase 25 family.

Involved in extracellular lipooligosaccharide (LOS) biosynthesis and virulence expression. Involved in the synthesis of the oligosaccharide moiety of the LOS molecule by adding GalNAc. This Haemophilus influenzae (strain ATCC 51907 / DSM 11121 / KW20 / Rd) protein is Lipooligosaccharide biosynthesis protein lex-1 (lex1).